Here is a 358-residue protein sequence, read N- to C-terminus: MSKKKLPPSSHSPLSYRDAGVDIDAGNQLIQRIKPAANRTTRPGVLTSLGGFGSLFELPIHRYQHPVLVAGTDGVGTKLKLAIQLNRHDSIGIDLVAMCANDIIVQGAEPLFFLDYYATGRLEVDIAAEIIEGIAHGCELAGVALVGGETAEMPGIYQAGDYDLAGFCVGVVEKERLIDGSQVQAGDHLIGIASSGPHANGYSLIRKILERSRYSLNSPLADQTLGDALLTPTRIYVKPLLQLLEVIEIHALAHITGGGLPENLPRVLPPMLSAEIDTSRWPRLPIFDWLQREGNLSEQELYRTFNCGIGMVVCVDQADTEQALEFLKDRGESAWLIGRIVPQTSDGQRVAFNTGNPL.

Belongs to the AIR synthase family.

The protein resides in the cytoplasm. The enzyme catalyses 2-formamido-N(1)-(5-O-phospho-beta-D-ribosyl)acetamidine + ATP = 5-amino-1-(5-phospho-beta-D-ribosyl)imidazole + ADP + phosphate + H(+). It participates in purine metabolism; IMP biosynthesis via de novo pathway; 5-amino-1-(5-phospho-D-ribosyl)imidazole from N(2)-formyl-N(1)-(5-phospho-D-ribosyl)glycinamide: step 2/2. The sequence is that of Phosphoribosylformylglycinamidine cyclo-ligase from Nitrosococcus oceani (strain ATCC 19707 / BCRC 17464 / JCM 30415 / NCIMB 11848 / C-107).